Here is a 255-residue protein sequence, read N- to C-terminus: Trypsin alpha-4 (255 aa).

An N-terminal signal peptide occupies residues 1–16 (MLKFVVLLCAISCALG). Positions 17–30 (AAVPEGMVPQLDGR) are cleaved as a propeptide — activation peptide. The region spanning 31 to 253 (IVGGVATTIS…LRTWVVSAAS (223 aa)) is the Peptidase S1 domain. A disulfide bridge connects residues cysteine 56 and cysteine 72. Active-site charge relay system residues include histidine 71 and aspartate 116. Disulfide bonds link cysteine 179/cysteine 196 and cysteine 205/cysteine 229. The Charge relay system role is filled by serine 209.

This sequence belongs to the peptidase S1 family.

Its subcellular location is the secreted. The protein localises to the extracellular space. It catalyses the reaction Preferential cleavage: Arg-|-Xaa, Lys-|-Xaa.. This chain is Trypsin alpha-4, found in Lucilia cuprina (Green bottle fly).